The following is a 244-amino-acid chain: Uridylate kinase (244 aa).

ATP is bound at residue 17–20; that stretch reads KVSG. Positions 25 to 30 are involved in allosteric activation by GTP; the sequence is GDKGFG. Residue G59 coordinates UMP. 2 residues coordinate ATP: G60 and R64. UMP contacts are provided by residues D80 and 141 to 148; that span reads VGNPFFTT. Residues T168, Q169, Y174, and D177 each contribute to the ATP site.

Belongs to the UMP kinase family. As to quaternary structure, homohexamer.

It is found in the cytoplasm. It carries out the reaction UMP + ATP = UDP + ADP. The protein operates within pyrimidine metabolism; CTP biosynthesis via de novo pathway; UDP from UMP (UMPK route): step 1/1. With respect to regulation, allosterically activated by GTP. Inhibited by UTP. Its function is as follows. Catalyzes the reversible phosphorylation of UMP to UDP. The chain is Uridylate kinase from Ehrlichia ruminantium (strain Welgevonden).